A 304-amino-acid chain; its full sequence is Murein tetrapeptide carboxypeptidase (304 aa).

Residue S106 is the Nucleophile of the active site. Residues E200 and H270 each act as charge relay system in the active site.

The protein belongs to the peptidase S66 family.

It localises to the cytoplasm. The catalysed reaction is N-acetyl-D-glucosaminyl-N-acetylmuramoyl-L-alanyl-meso-2,6-diaminoheptanedioyl-D-alanine + H2O = N-acetyl-D-glucosaminyl-N-acetylmuramoyl-L-alanyl-meso-2,6-diaminoheptanedioate + D-alanine. Its pathway is cell wall biogenesis; peptidoglycan recycling. Inhibited by beta-lactams containing a D-amino acid side chain. In terms of biological role, releases the terminal D-alanine residue from the cytoplasmic tetrapeptide recycling product L-Ala-gamma-D-Glu-meso-Dap-D-Ala. To a lesser extent, can also cleave D-Ala from murein derivatives containing the tetrapeptide, i.e. MurNAc-tetrapeptide, UDP-MurNAc-tetrapeptide, GlcNAc-MurNAc-tetrapeptide, and GlcNAc-anhMurNAc-tetrapeptide. Does not act on murein sacculi or cross-linked muropeptides. The tripeptides produced by the LcdA reaction can then be reused as peptidoglycan building blocks; LcdA is thereby involved in murein recycling. Is also essential for viability during stationary phase. In Escherichia coli (strain K12), this protein is Murein tetrapeptide carboxypeptidase (ldcA).